The following is a 391-amino-acid chain: Putative alpha-ketoglutarate-dependent sulfonate dioxygenase (391 aa).

Fe cation is bound by residues His-204 and Asp-206. The 2-oxoglutarate site is built by Thr-231 and Trp-338. A Fe cation-binding site is contributed by His-353. Arg-364 and Arg-368 together coordinate 2-oxoglutarate.

This sequence belongs to the TfdA dioxygenase family. It depends on Fe(2+) as a cofactor.

The protein operates within organosulfur degradation; alkanesulfonate degradation. In terms of biological role, acts as an alpha-ketoglutarate-dependent dioxygenase active on sulfonates. This Schizosaccharomyces pombe (strain 972 / ATCC 24843) (Fission yeast) protein is Putative alpha-ketoglutarate-dependent sulfonate dioxygenase.